Consider the following 626-residue polypeptide: Dynein, cytoplasmic 1, intermediate chain 2a (626 aa).

Basic and acidic residues predominate over residues 20 to 43 (QIREEKKRKEEERKKKEAELKKDA). Disordered stretches follow at residues 20–108 (QIRE…RTLH) and 142–197 (KEVV…HELT). A compositionally biased stretch (polar residues) spans 82-99 (TAKSVGSPSEAGSQDSGD). Positions 160-169 (KDEEDEEEET) are enriched in acidic residues. The segment covering 177-197 (ETEKEKPEEKQVEEALPHELT) has biased composition (basic and acidic residues). 7 WD repeats span residues 265–314 (SKQR…ATPE), 318–358 (HCQS…RTPV), 367–408 (AHTH…QPQD), 417–457 (SKSV…AGIS), 462–507 (GHHG…PLYS), 510–550 (DNSD…EVPT), and 556–595 (DGSPALNRLRWSQSGREIAVGDSEGQIHIYDVGEQIAVPR).

It belongs to the dynein intermediate chain family. Homodimer. The cytoplasmic dynein 1 complex consists of two catalytic heavy chains (HCs) and a number of non-catalytic subunits presented by intermediate chains (ICs), light intermediate chains (LICs) and light chains (LCs); the composition seems to vary in respect to the IC, LIC and LC composition. The heavy chain homodimer serves as a scaffold for the probable homodimeric assembly of the respective non-catalytic subunits. The ICs and LICs bind directly to the HC dimer and the LCs assemble on the IC dimer.

The protein resides in the cytoplasm. It localises to the cytoskeleton. Acts as one of several non-catalytic accessory components of the cytoplasmic dynein 1 complex that are thought to be involved in linking dynein to cargos and to adapter proteins that regulate dynein function. Cytoplasmic dynein 1 acts as a motor for the intracellular retrograde motility of vesicles and organelles along microtubules. Plays a role in the development of anterior brain and cartilaginous structures. This chain is Dynein, cytoplasmic 1, intermediate chain 2a (dync1i2a), found in Danio rerio (Zebrafish).